The sequence spans 353 residues: Probable dual-specificity RNA methyltransferase RlmN (353 aa).

Glu90 functions as the Proton acceptor in the catalytic mechanism. Residues 96 to 326 form the Radical SAM core domain; that stretch reads YKHGNSICIS…VTTRREMGSD (231 aa). The cysteines at positions 103 and 331 are disulfide-linked. [4Fe-4S] cluster-binding residues include Cys110, Cys114, and Cys117. S-adenosyl-L-methionine is bound by residues 157-158, Ser189, 212-214, and Asn288; these read GE and SLH. The active-site S-methylcysteine intermediate is Cys331.

This sequence belongs to the radical SAM superfamily. RlmN family. It depends on [4Fe-4S] cluster as a cofactor.

Its subcellular location is the cytoplasm. The enzyme catalyses adenosine(2503) in 23S rRNA + 2 reduced [2Fe-2S]-[ferredoxin] + 2 S-adenosyl-L-methionine = 2-methyladenosine(2503) in 23S rRNA + 5'-deoxyadenosine + L-methionine + 2 oxidized [2Fe-2S]-[ferredoxin] + S-adenosyl-L-homocysteine. It carries out the reaction adenosine(37) in tRNA + 2 reduced [2Fe-2S]-[ferredoxin] + 2 S-adenosyl-L-methionine = 2-methyladenosine(37) in tRNA + 5'-deoxyadenosine + L-methionine + 2 oxidized [2Fe-2S]-[ferredoxin] + S-adenosyl-L-homocysteine. Functionally, specifically methylates position 2 of adenine 2503 in 23S rRNA and position 2 of adenine 37 in tRNAs. This chain is Probable dual-specificity RNA methyltransferase RlmN, found in Clostridium beijerinckii (strain ATCC 51743 / NCIMB 8052) (Clostridium acetobutylicum).